A 197-amino-acid chain; its full sequence is MEKITASVRLKKTRGERNRLLKEGKVPGVMYGKNIEPVAVAVNARELESLVERGLKLFELSVEGKTQRVLVKELQHHPVTGKLIHVDFQVVESGRKIRQLVPVELYGEPAGVKAGGILEHGLSEVTVECLPEDLPEFIEADVSKLEVGDCLRVKDLELPPGVRVIEDPESIIALISAPRDYVEEEEETTTSAPEATA.

This sequence belongs to the bacterial ribosomal protein bL25 family. CTC subfamily. Part of the 50S ribosomal subunit; part of the 5S rRNA/L5/L18/L25 subcomplex. Contacts the 5S rRNA. Binds to the 5S rRNA independently of L5 and L18.

Functionally, this is one of the proteins that binds to the 5S RNA in the ribosome where it forms part of the central protuberance. This is Large ribosomal subunit protein bL25 from Carboxydothermus hydrogenoformans (strain ATCC BAA-161 / DSM 6008 / Z-2901).